Consider the following 494-residue polypeptide: UPF0371 protein SP70585_0405 (494 aa).

The protein belongs to the UPF0371 family.

This is UPF0371 protein SP70585_0405 from Streptococcus pneumoniae (strain 70585).